A 301-amino-acid polypeptide reads, in one-letter code: uncharacterized protein (301 aa).

Belongs to the asfivirus E301R family. As to quaternary structure, interacts with host IRF3.

Its function is as follows. Plays a role in the inhibition of host innate immune system by acting as a negatively regulator of type I interferon production. Mechanistically, interacts with and prevents host IRF3 nuclear localization to inhibit its transcriptional activity. This is an uncharacterized protein from African swine fever virus (isolate Warthog/Namibia/Wart80/1980) (ASFV).